A 452-amino-acid polypeptide reads, in one-letter code: Acetyl-CoA decarbonylase/synthase complex subunit delta (452 aa).

This sequence belongs to the CdhD family. In terms of assembly, heterodimer of delta and gamma chains. The ACDS complex is made up of alpha, epsilon, beta, gamma and delta chains with a probable stoichiometry of (alpha(2)epsilon(2))(4)-beta(8)-(gamma(1)delta(1))(8).

In terms of biological role, part of a complex that catalyzes the reversible cleavage of acetyl-CoA, allowing autotrophic growth from CO(2). Probably maintains the overall quaternary structure of the ACDS complex. The sequence is that of Acetyl-CoA decarbonylase/synthase complex subunit delta from Archaeoglobus fulgidus (strain ATCC 49558 / DSM 4304 / JCM 9628 / NBRC 100126 / VC-16).